A 352-amino-acid polypeptide reads, in one-letter code: Ion-translocating oxidoreductase complex subunit D (352 aa).

The next 4 helical transmembrane spans lie at 20–40 (IMLLVLIAALPGVAAQTWFFG), 44–64 (LFQIVLAAVTALFAEAIVLSL), 78–109 (ALLTGLLLAVSIPPLAPWWMIVLGTGFAIIIA), and 123–143 (PAMIGYVVLLISFPVQMTSWL). FMN phosphoryl threonine is present on threonine 187. The next 5 membrane-spanning stretches (helical) occupy residues 214–234 (VLAGVGWQWVNLAWLVGGVFL), 242–262 (WHIPVSFLVTLALCATLGWLF), 267–287 (LASPQLHLLSGATMLGAFFIL), 301–321 (LIFGALAGVLVWLIRSFGGYP), and 322–342 (DGVAFAVLLANITVPLIDYYT).

This sequence belongs to the NqrB/RnfD family. The complex is composed of six subunits: RsxA, RsxB, RsxC, RsxD, RsxE and RsxG. FMN is required as a cofactor.

It is found in the cell inner membrane. In terms of biological role, part of a membrane-bound complex that couples electron transfer with translocation of ions across the membrane. Required to maintain the reduced state of SoxR. This is Ion-translocating oxidoreductase complex subunit D from Salmonella arizonae (strain ATCC BAA-731 / CDC346-86 / RSK2980).